Here is a 580-residue protein sequence, read N- to C-terminus: Keratin, type II cytoskeletal 5 (580 aa).

A head region spans residues 1–161 (MSRQSSVSFR…DPTIQRVRTE (161 aa)). Phosphoserine is present on residues serine 5, serine 8, serine 16, and serine 21. Threonine 24 is modified (phosphothreonine; by CDK1). Phosphoserine occurs at positions 26, 36, 47, 61, 68, 72, 75, and 79. Threonine 145 is subject to Phosphothreonine; by CDK1. Threonine 160 carries the phosphothreonine; by AURKB modification. Positions 162–197 (EREQIKTLNNKFASFIDKVRFLEQQNKVLDTKWALL) are coil 1A. Residues 162-475 (EREQIKTLNN…KLLEGEECRL (314 aa)) enclose the IF rod domain. Residues 198 to 216 (QEQGTKTIKQNLDPLFEQY) are linker 1. Residues 217–309 (INNLRRQLDG…FFDAELSQMQ (93 aa)) are coil 1B. The linker 12 stretch occupies residues 310 to 332 (THVSDTSVVLSMDNNRSLDLDSI). A coil 2 region spans residues 333 to 471 (IAEVKAQYED…ATYRKLLEGE (139 aa)). The segment at 472-580 (ECRLSGEGVG…TSSSRRSFKS (109 aa)) is tail. At arginine 526 the chain carries Omega-N-methylarginine. The segment at 555–580 (FGSGGGSGSSVKFVSTTSSSRRSFKS) is disordered. A compositionally biased stretch (low complexity) spans 563 to 580 (SSVKFVSTTSSSRRSFKS).

Belongs to the intermediate filament family. Heterodimer of a type I and a type II keratin. Heterodimer with type I keratin KRT25 leading to the formation of keratin intermediate filament (KIF) network. Forms a heterodimer (via 2B domains) with KRT14 (via 2B domains). Interacts with PLEC isoform 1C, when in a heterodimer with KRT14. Interacts with TCHP. Interacts with EPPK1. Interacts with AMELX. Interacts with PKP1 (via N-terminus) and PKP2. Post-translationally, phosphorylated by CDK1, AURKB and Rho-kinase, phosphorylation is regulated by the cell cycle. Thr-24 phosphorylation, mediated by CDK1, peaks during prometaphase or metaphase cells with phosphorylated filamentous structures evident throughout the cytoplasm during early mitosis. CDK1 phosphorylates Thr-24 in mitotic cells at the site of injury. O-glycosylated. As to expression, expressed in the corneal epithelium (at protein level). Expressed in the epidermis of the ear (at protein level). Expressed in the basal and spinous layers of the skin at birth (at protein level).

The protein resides in the cytoplasm. Its function is as follows. Required for the formation of keratin intermediate filaments in the basal epidermis and maintenance of the skin barrier in response to mechanical stress. Regulates the recruitment of Langerhans cells to the epidermis, potentially by modulation of the abundance of macrophage chemotactic cytokines, macrophage inflammatory cytokines and CTNND1 localization in keratinocytes. This is Keratin, type II cytoskeletal 5 from Mus musculus (Mouse).